The sequence spans 1358 residues: MTYSYTEKKRIRKDFSKLPSVMEVPYLLSIQLDSFRDYLQMETAPEDRRETGLHAAFKSVFPIVSYSGNAALEYVSYRIGEPVFDVKECQLRGVTYAAPLRVKVRLIIYDKESSNKAIKDIKEQEVYMGEMPLMTENGTFVVNGTERVIVSQLHRSPGVFFDHDKGKTHSSGKLLYSARVIPYRGSWLDFEFDPKDAVFVRIDRRRKLPASILLRGLGYTSEQMLEMFFETSKFSLGAEVCKLELVPSRLRGDIATFDIKDNDGNVIVEEGRRITARHIKQLEKAGITELEVPTEYLYGRVLAKDMIDQSTGEVLVECNTELTEEVVTKILDAGVKDIETLYTNDLDCGPFMSDTLRIDPTRTPLEALVEIYRMMRPGEPPTKESAENLFNNLFFSEERYDLSAVGRMKLNRRLGREESTGEGTLTHDDIIDVLKTLIAIRNGQGQVDDIDNLGNRRVRCVGEMAENQFRVGLVRVERAVRERLSLAESEGLMPQDLINAKPVAAAVKEFFGSSQLSQFMDQNNPLSEVTHKRRISALGPGGLTRERAGFEVRDVHPTHYGRVCPIETPEGPNIGLINSLATYARSNSYGFLESPYRKVVDGVVTDEVVYLSAIEESNYVIAQASAATDEGKRLTDELVTVRHQNEFTVAPPEAVNFMDVSPRQVVSVAASLIPFLEHDDANRALMGANMQRQAVPTLKSQVPLVGTGVERTVAQDSGVCVTARRGGVIESVDAARIVVRVNNEETEAGDAGVDIYNLTKYTRSNQNTCINQRSIVRQGDVIARGDVLADGPSVDLGELALGQNMRIAFMPWNGYNFEDSILISEKVVQEDRLTTIHIQELTCVARDTKLGSEEITADIPNVGESALSKLDESGIVYIGAEVGPGDILVGKVTPKGETQLTPEEKLLRAIFGEKASDVKDTSQRVPTGTRGTVIDVQVFTRDGIEKDARALSIEKEQLDKYRKDLKDEYRIVEGATFERLMAALKGQEVISGPGLKKGAKLEEAYLAELPRADWFKLRMKDEALNELLEKSEQGLEDRKKEHEARFDDKKGKLQQGDDLAPGVLKIVKVYLAIKRRIQPGDKMAGRHGNKGVISAVMPIEDMPYDEFGNTVDIVLNPLGVPSRMNVGQVLETHLGAAAKGLGERISRMLDEQRKVAELRKLLDEIYNHSDEVFKVDLDSLTDKEIFELCNNLRGGVPMATPVFDGAKEAEVKRMLELAGLDTTGQTKLYDGRTGDAFDRPVTVGYMYILKLNHLIDDKMHARSTGSYSLVTQQPLGGKAQFGGQRFGEMEVWALEAYGAAYTLQEMLTVKSDDVNGRTKMYKNIVDGDHRMEPGMPESFNVLVKEIRSLGIDIELESE.

A compositionally biased stretch (basic and acidic residues) spans 1033 to 1051 (QGLEDRKKEHEARFDDKKG). The tract at residues 1033–1053 (QGLEDRKKEHEARFDDKKGKL) is disordered.

It belongs to the RNA polymerase beta chain family. In terms of assembly, the RNAP catalytic core consists of 2 alpha, 1 beta, 1 beta' and 1 omega subunit. When a sigma factor is associated with the core the holoenzyme is formed, which can initiate transcription.

The catalysed reaction is RNA(n) + a ribonucleoside 5'-triphosphate = RNA(n+1) + diphosphate. Its function is as follows. DNA-dependent RNA polymerase catalyzes the transcription of DNA into RNA using the four ribonucleoside triphosphates as substrates. This Marinobacter nauticus (strain ATCC 700491 / DSM 11845 / VT8) (Marinobacter aquaeolei) protein is DNA-directed RNA polymerase subunit beta.